The following is a 281-amino-acid chain: Leukocyte antigen CD37 (281 aa).

Topologically, residues 1–17 are cytoplasmic; it reads MSAQESCLSLIKYFLFV. A helical membrane pass occupies residues 18-38; sequence FNLFFFVLGGLIFCFGTWILI. The Extracellular segment spans residues 39-59; the sequence is DKTSFVSFVGLSFVPLQTWSK. The helical transmembrane segment at 60-74 threads the bilayer; it reads VLAVSGVLTMALALL. Residues 75–85 are Cytoplasmic-facing; sequence GCVGALKELRC. The helical transmembrane segment at 86–111 threads the bilayer; that stretch reads LLGLYFGMLLLLFATQITLGILISTQ. Residues 112–241 lie on the Extracellular side of the membrane; that stretch reads RVRLERRVQE…QSLQKWLHNN (130 aa). Residues N170, N183, and N188 are each glycosylated (N-linked (GlcNAc...) asparagine). A helical transmembrane segment spans residues 242–266; sequence IISIVGICLGVGLLELGFMTLSIFL. The Cytoplasmic segment spans residues 267 to 281; sequence CRNLDHVYDRLARYR.

It belongs to the tetraspanin (TM4SF) family. In terms of assembly, interacts with SCIMP. Interacts with SOCS3. Interacts with DECTIN1/CLEC7A. In terms of processing, tyrosine phosphorylated; leading to activation of downstream signaling pathways.

Its subcellular location is the cell membrane. In terms of biological role, structural component of specialized membrane microdomains known as tetraspanin-enriched microdomains (TERMs), which act as platforms for receptor clustering and signaling. Participates thereby in diverse biological functions such as cell signal transduction, adhesion, migration and protein trafficking. Upon ligand binding, two signaling pathways are activated, one acting through phosphorylation by LYN leading to cell death or a survival pathway with activation of GSK3B. Plays an essential role for clustering of integrin ITGA4/ITGB1 and promotes its mobility in the plasma membrane of B-cells. In turn, participates in ITGA4/ITGB1 integrin-mediated antiapoptotic signaling through AKT. Also plays a role in the migration of dendritic cells and neutrophils to draining lymph nodes, as well as in their integrin-mediated adhesion. Negatively regulates IL-6 responses through direct interaction with SOCS3 thereby preventing constitutive IL-6 signaling. Alternatively, inhibition of IL-6 signaling can also occur via interaction and stabilization of DECTIN1/CLEC7A at the cell membrane to inhibit its ability to promote the production of IL-6. This is Leukocyte antigen CD37 (Cd37) from Mus musculus (Mouse).